Reading from the N-terminus, the 225-residue chain is Ribonuclease T (225 aa).

The segment at 1–21 (MSEDHFDDEHEGHGGGGGSRH) is disordered. The region spanning 33-207 (VVVDVETGGF…YDTEKTAELF (175 aa)) is the Exonuclease domain. Mg(2+) is bound by residues D36, E38, H194, and D199. H194 acts as the Proton donor/acceptor in catalysis.

Belongs to the RNase T family. As to quaternary structure, homodimer. Mg(2+) is required as a cofactor.

Its function is as follows. Trims short 3' overhangs of a variety of RNA species, leaving a one or two nucleotide 3' overhang. Responsible for the end-turnover of tRNA: specifically removes the terminal AMP residue from uncharged tRNA (tRNA-C-C-A). Also appears to be involved in tRNA biosynthesis. The protein is Ribonuclease T of Pseudomonas syringae pv. syringae (strain B728a).